Reading from the N-terminus, the 147-residue chain is Small ribosomal subunit protein bS6 (147 aa).

The tract at residues 103–147 (AARMAANLPSFPEDEDTEEKGSAPLAREEEGIGEEAQTDEAEDKE) is disordered. The segment covering 133 to 147 (GIGEEAQTDEAEDKE) has biased composition (acidic residues).

It belongs to the bacterial ribosomal protein bS6 family.

Its function is as follows. Binds together with bS18 to 16S ribosomal RNA. The sequence is that of Small ribosomal subunit protein bS6 from Syntrophobacter fumaroxidans (strain DSM 10017 / MPOB).